We begin with the raw amino-acid sequence, 278 residues long: Putative transcription factor kapC (278 aa).

A compositionally biased stretch (pro residues) spans 1–10 (MQPALAPAPH). A disordered region spans residues 1–121 (MQPALAPAPH…QNRAAQRAFR (121 aa)). A compositionally biased stretch (polar residues) spans 56–68 (PTATTSPRDQNNI). The region spanning 103–166 (PLSTSKRAAQ…EYVINLQSRL (64 aa)) is the bZIP domain. The tract at residues 104-127 (LSTSKRAAQNRAAQRAFRQRKESY) is basic motif. Residues 109 to 119 (RAAQNRAAQRA) are compositionally biased toward low complexity. The tract at residues 131-162 (LEEQVKEYEVMSQEYKALQAENYQLREYVINL) is leucine-zipper. Residues 173-278 (VPELPGNIDL…PPTHGLPMVS (106 aa)) are disordered. Low complexity predominate over residues 198 to 214 (PGQAGASAPPQGSPQSQ). Over residues 215-226 (VSIANDDMNSLN) the composition is skewed to polar residues. The span at 254–269 (GRGDETADPSETKTEP) shows a compositional bias: basic and acidic residues.

It belongs to the bZIP family.

Its subcellular location is the nucleus. Putative transcription factor. In Emericella nidulans (strain FGSC A4 / ATCC 38163 / CBS 112.46 / NRRL 194 / M139) (Aspergillus nidulans), this protein is Putative transcription factor kapC (kapC).